We begin with the raw amino-acid sequence, 477 residues long: Shikimate biosynthesis protein AroDE (477 aa).

The interval 1 to 209 is 3-dehydroquinate dehydratase; that stretch reads MLCATVSGPS…LEELLSYNYS (209 aa). 3-dehydroquinate contacts are provided by residues S21, 29 to 31, and 56 to 58; these read ELR and TFR. The active-site Proton donor/acceptor; for 3-dehydroquinate dehydratase activity is the H111. K134 acts as the Schiff-base intermediate with substrate; for 3-dehydroquinate dehydratase activity in catalysis. 3-dehydroquinate-binding residues include R172 and Q197. Residues 210 to 477 form a shikimate 5-dehydrogenase region; that stretch reads KLSEKSHIYG…NYVKNFMAKV (268 aa). 228–230 is a shikimate binding site; it reads SIS. The Proton acceptor; for shikimate dehydrogenase activity role is filled by K279. Residues N300 and D315 each coordinate shikimate. NADP(+) contacts are provided by residues 339–343, 362–364, and G438; these read GAGGA and NRT. Position 445 (Q445) interacts with shikimate.

In the N-terminal section; belongs to the type-I 3-dehydroquinase family. It in the C-terminal section; belongs to the shikimate dehydrogenase family.

The catalysed reaction is 3-dehydroquinate = 3-dehydroshikimate + H2O. The enzyme catalyses shikimate + NADP(+) = 3-dehydroshikimate + NADPH + H(+). It participates in metabolic intermediate biosynthesis; chorismate biosynthesis; chorismate from D-erythrose 4-phosphate and phosphoenolpyruvate: step 3/7. It functions in the pathway metabolic intermediate biosynthesis; chorismate biosynthesis; chorismate from D-erythrose 4-phosphate and phosphoenolpyruvate: step 4/7. Bifunctional enzyme that catalyzes two sequential steps of the aromatic amino acids biosynthetic pathway. In the first reaction, the AroD domain catalyzes the cis-dehydration of 3-dehydroquinate (DHQ) and introduces the first double bond of the aromatic ring to yield 3-dehydroshikimate; in the second reaction, the AroE domain catalyzes the reversible NADPH linked reduction of 3-dehydroshikimate (DHSA) to yield shikimate (SA). The chain is Shikimate biosynthesis protein AroDE from Chlamydia pneumoniae (Chlamydophila pneumoniae).